A 540-amino-acid chain; its full sequence is Terminase large subunit (540 aa).

Mn(2+) contacts are provided by Asp352, Asp424, and Asp523.

Belongs to the skunavirus terminase large subunit family. In terms of assembly, interacts with the terminase small subunit; the active complex is probably heterooligomeric. Requires Mn(2+) as cofactor. Mg(2+) serves as cofactor.

Its function is as follows. Probable terminase large subunit. The terminase large subunit acts as an ATP driven molecular motor necessary for viral DNA translocation into empty capsids and as an endonuclease that cuts the viral genome to initiate and to end a packaging reaction. The terminase lies at a unique vertex of the procapsid and is composed of two subunits, a small terminase subunit involved in viral DNA recognition (packaging sequence), and a large terminase subunit possessing endonucleolytic and ATPase activities. Both terminase subunits heterooligomerize and are docked on the portal protein to form the packaging machine. The terminase large subunit exhibits endonuclease activity and cleaves the viral genome concatemer. The protein is Terminase large subunit of Lactococcus lactis (Lactococcus lactis bacteriophage p2).